A 271-amino-acid polypeptide reads, in one-letter code: Orotidine 5'-phosphate decarboxylase (271 aa).

K95 (proton donor) is an active-site residue.

It belongs to the OMP decarboxylase family. Type 2 subfamily.

It catalyses the reaction orotidine 5'-phosphate + H(+) = UMP + CO2. It functions in the pathway pyrimidine metabolism; UMP biosynthesis via de novo pathway; UMP from orotate: step 2/2. The sequence is that of Orotidine 5'-phosphate decarboxylase from Ralstonia pickettii (strain 12J).